Here is a 437-residue protein sequence, read N- to C-terminus: MTLAELLPSVGMTGEPALETGLWPLGTRLERGELLLGGVPATELAARFGTPCQVLDEGTVRARARAFREALPEAEVVFAGKALPCREVYRWVADEGLSLDVCSAGELAIARSVGFPAERVLLHGNVKTPEDLKAALGYGVGRVVVDSFDEIEQLGALAEGPQDVLVRVTPGVDPRTHRAVATGVEDQKFGFSLAGGDALEAVLRVVEQPSLRLVGLHCHVGSQVRHVAVYEEAARRVVGLIASCGVRIEQLDLGGGFAVPYLPGEGEFDLGGFAHRVRVALSHECALRRVPVPRLSIEPGRAVVARAGVTLYRVAAVKRGVRRVFVAVDGGMSDNPRPALYGSRYAVRLVRRGGRRAPVTVVGRHCEAGDVLAEDVPLPEDVRAGDLLAVPVTGAYHHALASNYNAVGRPPVVGVRDGVARVLVRRETEEDLLRREV.

The residue at position 81 (Lys-81) is an N6-(pyridoxal phosphate)lysine. Pyridoxal 5'-phosphate-binding positions include Gly-256 and 298 to 301 (EPGR). Substrate contacts are provided by Arg-301, Arg-337, and Tyr-341. The active-site Proton donor is Cys-366. 2 residues coordinate substrate: Glu-367 and Tyr-396. Residue Tyr-396 participates in pyridoxal 5'-phosphate binding.

It belongs to the Orn/Lys/Arg decarboxylase class-II family. LysA subfamily. In terms of assembly, homodimer. Pyridoxal 5'-phosphate is required as a cofactor.

It carries out the reaction meso-2,6-diaminopimelate + H(+) = L-lysine + CO2. The protein operates within amino-acid biosynthesis; L-lysine biosynthesis via DAP pathway; L-lysine from DL-2,6-diaminopimelate: step 1/1. In terms of biological role, specifically catalyzes the decarboxylation of meso-diaminopimelate (meso-DAP) to L-lysine. The polypeptide is Diaminopimelate decarboxylase (Actinosynnema pretiosum subsp. auranticum).